The chain runs to 525 residues: GMP synthase [glutamine-hydrolyzing] (525 aa).

The Glutamine amidotransferase type-1 domain occupies 9-207 (RILILDFGSQ…ILDICGCEAL (199 aa)). C86 (nucleophile) is an active-site residue. Catalysis depends on residues H181 and E183. Positions 208 to 400 (WTPSKIAEDA…LGLPYDMVYR (193 aa)) constitute a GMPS ATP-PPase domain. Residue 235–241 (SGGVDSS) coordinates ATP.

Homodimer.

The enzyme catalyses XMP + L-glutamine + ATP + H2O = GMP + L-glutamate + AMP + diphosphate + 2 H(+). The protein operates within purine metabolism; GMP biosynthesis; GMP from XMP (L-Gln route): step 1/1. Catalyzes the synthesis of GMP from XMP. This is GMP synthase [glutamine-hydrolyzing] from Pseudomonas savastanoi pv. phaseolicola (strain 1448A / Race 6) (Pseudomonas syringae pv. phaseolicola (strain 1448A / Race 6)).